The primary structure comprises 472 residues: Riboflavin transporter RibJ (472 aa).

The Cytoplasmic portion of the chain corresponds to 1–11 (MLPCFTRKPVD). Residues 12-32 (HPLGFLVALSGLLMQLMSYGI) form a helical membrane-spanning segment. At 33 to 58 (DNSYSIFSDDMHKDPSLGYPSVTTIS) the chain is on the extracellular side. The helical transmembrane segment at 59-79 (LGNSVSLGLSPAFGVLCGFLV) threads the bilayer. The Cytoplasmic segment spans residues 80-85 (DRVPPR). Residues 86 to 106 (LMMAVSTLMLFAGLWLSSTFA) traverse the membrane as a helical segment. At 107 to 108 (HN) the chain is on the extracellular side. An N-linked (GlcNAc...) asparagine glycan is attached at asparagine 108. A helical transmembrane segment spans residues 109–129 (VTAVTFSYCLLASISSACMLS). The Cytoplasmic portion of the chain corresponds to 130–144 (PGAAATSSWFNRYQG). A helical membrane pass occupies residues 145-165 (LAMGINFSGGGVGSAIIPSLA). At 166-179 (GKWVVAYGWRKTFR) the chain is on the extracellular side. Residues 180 to 196 (LMSAFCAIGVVATLLSA) traverse the membrane as a helical segment. Topologically, residues 197–271 (RRAPPKKEEA…TMFSRAFLGN (75 aa)) are cytoplasmic. Residues 200 to 248 (PPKKEEAGPSEYDEGQERQEQGEEEQAHTDEENRNNNNSNGETTPARRG) are disordered. A compositionally biased stretch (basic and acidic residues) spans 214–233 (GQERQEQGEEEQAHTDEENR). The chain crosses the membrane as a helical span at residues 272 to 292 (FFCWLIFSWAFYSLIYVAVPY). Topologically, residues 293 to 315 (VSSMGKAGTVYADISPIPTDIAS) are extracellular. Residues 316–336 (TLFTFYGVFQIVGSILVGWLA) traverse the membrane as a helical segment. Over 337–341 (TGTTN) the chain is Cytoplasmic. A helical transmembrane segment spans residues 342-362 (EFAYVLCATIGGIFCAFLGFC). Over 363–365 (RSY) the chain is Extracellular. The helical transmembrane segment at 366–386 (VAFALLLCVIGFCMAGMFAVM) threads the bilayer. Topologically, residues 387–399 (PALIAERLYGPNL) are cytoplasmic. Residues 400–420 (GFYMGAVFLAGVVGGFSAPPI) form a helical membrane-spanning segment. Topologically, residues 421–434 (QAELQQRHYGNYTY) are extracellular. N-linked (GlcNAc...) asparagine glycosylation is present at asparagine 431. Residues 435 to 455 (VCVFMSACMTLAAAVCYITMW) traverse the membrane as a helical segment. Residues 456-472 (RDKRVRIVSAAAEAKLA) are Cytoplasmic-facing.

Belongs to the major facilitator superfamily. RibJ family.

It localises to the cell membrane. Its function is as follows. Transporter involved in riboflavin (vitamin B2) uptake. Also transports FMN and FAD. This Trypanosoma cruzi (strain CL Brener) protein is Riboflavin transporter RibJ.